The following is a 441-amino-acid chain: MSVYAHLSQTPAHPSARIQPVMILAGGTGGHIFPGLAVAKVLSARGVPVTWLGADGAMETRLVPQHDIPIDTLAITGLRGKGMVKLLGAPLRVMRAVRAAGFVLRKRQPRAVISFGGFAAGPGGLAARLLGAPLLVHEQNRAPGMTNKVLSRFARRVLTGFPGSFAGEEAVGNPVRAEIAALPAPADRLVGRTGPVCVLVLGGSQGARVLNQAVPTALAALGHPDVEVRHQCGEKLRAEAEVAYAQASVNASVEPFIADMAAAYAWADLVVCRAGASTLAELCAAGVGSVLVPFAAAVDDHQTRNAEYLVGADAAVLLKQDDSLAVRLQQVLQTLLTDPARRLSMANAARTLAKPDAAERIADIILQEAGTGDRQPPAVEERAGFGIGKEQQHKQDSMQNSVDGQFSGRSTAAVANLQCRSLFDSHRLAILTPGTFAGGAA.

UDP-N-acetyl-alpha-D-glucosamine contacts are provided by residues 28–30 (TGG), asparagine 140, arginine 176, serine 204, isoleucine 257, and glutamine 302.

Belongs to the glycosyltransferase 28 family. MurG subfamily.

The protein localises to the cell inner membrane. The enzyme catalyses di-trans,octa-cis-undecaprenyl diphospho-N-acetyl-alpha-D-muramoyl-L-alanyl-D-glutamyl-meso-2,6-diaminopimeloyl-D-alanyl-D-alanine + UDP-N-acetyl-alpha-D-glucosamine = di-trans,octa-cis-undecaprenyl diphospho-[N-acetyl-alpha-D-glucosaminyl-(1-&gt;4)]-N-acetyl-alpha-D-muramoyl-L-alanyl-D-glutamyl-meso-2,6-diaminopimeloyl-D-alanyl-D-alanine + UDP + H(+). Its pathway is cell wall biogenesis; peptidoglycan biosynthesis. In terms of biological role, cell wall formation. Catalyzes the transfer of a GlcNAc subunit on undecaprenyl-pyrophosphoryl-MurNAc-pentapeptide (lipid intermediate I) to form undecaprenyl-pyrophosphoryl-MurNAc-(pentapeptide)GlcNAc (lipid intermediate II). This chain is UDP-N-acetylglucosamine--N-acetylmuramyl-(pentapeptide) pyrophosphoryl-undecaprenol N-acetylglucosamine transferase, found in Xanthomonas oryzae pv. oryzae (strain MAFF 311018).